The primary structure comprises 622 residues: Signal recognition particle subunit SRP68 (622 aa).

A disordered region spans residues 576-622 (RDATPKKAAKGSSAAAASSKTSNQEEEEQQGLTGMLSGWKKSFWGNK). Residues 585–595 (KGSSAAAASSK) are compositionally biased toward low complexity.

Belongs to the SRP68 family. In terms of assembly, heterodimer with srpa-72. Srpa-68/srpa-72 heterodimer formation is stabilized by the presence of 7SL RNA. Component of a signal recognition particle (SRP) complex that consists of a 7SL RNA molecule of 300 nucleotides and six protein subunits: srpa-72, srpa-68, SRP54, F37F2.2/SRP19, F25G6.8/SRP14 and ZK512.4/SRP9. Within the SRP complex, interacts (via C-terminus) with srpa-72 (via N-terminus).

The protein resides in the cytoplasm. It is found in the nucleus. The protein localises to the nucleolus. Its subcellular location is the endoplasmic reticulum. Component of the signal recognition particle (SRP) complex, a ribonucleoprotein complex that mediates the cotranslational targeting of secretory and membrane proteins to the endoplasmic reticulum (ER). The SRP complex interacts with the signal sequence in nascent secretory and membrane proteins and directs them to the membrane of the ER. The SRP complex targets the ribosome-nascent chain complex to the SRP receptor (SR), which is anchored in the ER, where SR compaction and GTPase rearrangement drive cotranslational protein translocation into the ER. Binds the signal recognition particle RNA (7SL RNA), srpa-72 binds to this complex subsequently. The SRP complex possibly participates in the elongation arrest function. This Caenorhabditis elegans protein is Signal recognition particle subunit SRP68.